The chain runs to 436 residues: UPF0597 protein YhaM (436 aa).

This sequence belongs to the UPF0597 family.

The protein is UPF0597 protein YhaM of Salmonella dublin (strain CT_02021853).